We begin with the raw amino-acid sequence, 308 residues long: D-alanine--D-alanine ligase (308 aa).

In terms of domain architecture, ATP-grasp spans 105–302 (KAIFRSLGLA…FPDLCERILD (198 aa)). ATP is bound at residue 133 to 188 (DLPFGLPCVVKPAGEGSSVGVHLVNEAAELGPACRDAASHAGDVIVERYVKGTEVD). Residues Asp256, Glu269, and Asn271 each coordinate Mg(2+).

This sequence belongs to the D-alanine--D-alanine ligase family. The cofactor is Mg(2+). Mn(2+) is required as a cofactor.

The protein localises to the cytoplasm. It carries out the reaction 2 D-alanine + ATP = D-alanyl-D-alanine + ADP + phosphate + H(+). It participates in cell wall biogenesis; peptidoglycan biosynthesis. Cell wall formation. The sequence is that of D-alanine--D-alanine ligase from Anaeromyxobacter dehalogenans (strain 2CP-1 / ATCC BAA-258).